A 372-amino-acid chain; its full sequence is Queuine tRNA-ribosyltransferase (372 aa).

The Proton acceptor role is filled by aspartate 92. Substrate contacts are provided by residues 92-96 (DSGGY), aspartate 146, glutamine 188, and glycine 215. Positions 246–252 (GIGSLRE) are RNA binding. The active-site Nucleophile is the aspartate 265. The interval 270 to 274 (TRLGR) is RNA binding; important for wobble base 34 recognition. Positions 303, 305, 308, and 334 each coordinate Zn(2+).

Belongs to the queuine tRNA-ribosyltransferase family. Homodimer. Within each dimer, one monomer is responsible for RNA recognition and catalysis, while the other monomer binds to the replacement base PreQ1. Zn(2+) serves as cofactor.

The enzyme catalyses 7-aminomethyl-7-carbaguanine + guanosine(34) in tRNA = 7-aminomethyl-7-carbaguanosine(34) in tRNA + guanine. The protein operates within tRNA modification; tRNA-queuosine biosynthesis. In terms of biological role, catalyzes the base-exchange of a guanine (G) residue with the queuine precursor 7-aminomethyl-7-deazaguanine (PreQ1) at position 34 (anticodon wobble position) in tRNAs with GU(N) anticodons (tRNA-Asp, -Asn, -His and -Tyr). Catalysis occurs through a double-displacement mechanism. The nucleophile active site attacks the C1' of nucleotide 34 to detach the guanine base from the RNA, forming a covalent enzyme-RNA intermediate. The proton acceptor active site deprotonates the incoming PreQ1, allowing a nucleophilic attack on the C1' of the ribose to form the product. After dissociation, two additional enzymatic reactions on the tRNA convert PreQ1 to queuine (Q), resulting in the hypermodified nucleoside queuosine (7-(((4,5-cis-dihydroxy-2-cyclopenten-1-yl)amino)methyl)-7-deazaguanosine). This is Queuine tRNA-ribosyltransferase from Prochlorococcus marinus (strain MIT 9215).